A 562-amino-acid polypeptide reads, in one-letter code: Putative transport protein Spro_1639 (562 aa).

5 helical membrane passes run 8–28, 37–57, 66–86, 94–114, and 158–178; these read LLNG…LCLG, LGNS…HFAI, FMLF…SIFF, MLAL…GKLF, and HLSL…IFGA. 2 consecutive RCK C-terminal domains span residues 202–288 and 290–373; these read LDTD…SFRN and KEVF…KIGF. Helical transmembrane passes span 383–403, 406–426, 447–467, 475–495, and 541–561; these read LLAF…TIQF, FSFG…LGFL, FGLM…IGNS, MLIA…LFGA, and IANV…PGIL.

Belongs to the AAE transporter (TC 2.A.81) family. YbjL subfamily.

The protein localises to the cell membrane. The chain is Putative transport protein Spro_1639 from Serratia proteamaculans (strain 568).